Here is a 475-residue protein sequence, read N- to C-terminus: Aspartyl/glutamyl-tRNA(Asn/Gln) amidotransferase subunit B (475 aa).

The protein belongs to the GatB/GatE family. GatB subfamily. Heterotrimer of A, B and C subunits.

It carries out the reaction L-glutamyl-tRNA(Gln) + L-glutamine + ATP + H2O = L-glutaminyl-tRNA(Gln) + L-glutamate + ADP + phosphate + H(+). It catalyses the reaction L-aspartyl-tRNA(Asn) + L-glutamine + ATP + H2O = L-asparaginyl-tRNA(Asn) + L-glutamate + ADP + phosphate + 2 H(+). Allows the formation of correctly charged Asn-tRNA(Asn) or Gln-tRNA(Gln) through the transamidation of misacylated Asp-tRNA(Asn) or Glu-tRNA(Gln) in organisms which lack either or both of asparaginyl-tRNA or glutaminyl-tRNA synthetases. The reaction takes place in the presence of glutamine and ATP through an activated phospho-Asp-tRNA(Asn) or phospho-Glu-tRNA(Gln). This chain is Aspartyl/glutamyl-tRNA(Asn/Gln) amidotransferase subunit B, found in Chlorobium phaeobacteroides (strain BS1).